A 298-amino-acid polypeptide reads, in one-letter code: Factor-induced gene 1 protein (298 aa).

The next 4 helical transmembrane spans lie at 17 to 37 (IFALAFNLISIFLLIFLLIGC), 163 to 183 (VLMATVILTILMFLFILYVTV), 195 to 215 (FLLLLSSTIVLTWGIGAMWTH), and 243 to 263 (VMAWFSFAFLLLDSVVLWLIF). Position 288 is a phosphoserine (serine 288). Threonine 293 is subject to Phosphothreonine. Serine 296 is subject to Phosphoserine.

The protein resides in the membrane. In terms of biological role, required for efficient mating. The protein is Factor-induced gene 1 protein (FIG1) of Saccharomyces cerevisiae (strain ATCC 204508 / S288c) (Baker's yeast).